Here is a 434-residue protein sequence, read N- to C-terminus: D-amino acid dehydrogenase (434 aa).

3 to 17 lines the FAD pocket; the sequence is VLVLGSGVIGTASAY.

It belongs to the DadA oxidoreductase family. It depends on FAD as a cofactor.

It carries out the reaction a D-alpha-amino acid + A + H2O = a 2-oxocarboxylate + AH2 + NH4(+). It participates in amino-acid degradation; D-alanine degradation; NH(3) and pyruvate from D-alanine: step 1/1. Its function is as follows. Oxidative deamination of D-amino acids. The protein is D-amino acid dehydrogenase of Pseudomonas putida (strain ATCC 700007 / DSM 6899 / JCM 31910 / BCRC 17059 / LMG 24140 / F1).